Reading from the N-terminus, the 206-residue chain is LysM and putative peptidoglycan-binding domain-containing protein 2 (206 aa).

One can recognise a LysM domain in the interval 59–103; it reads IEHCLSPSDTLQGIALKYGVTMEQIKRANKLFSTDCIFLRKSLNI. Positions 184 to 206 are disordered; the sequence is AQRLKEEDDLRHDGSYATCSYQH. A compositionally biased stretch (basic and acidic residues) spans 186–197; it reads RLKEEDDLRHDG.

In Xenopus laevis (African clawed frog), this protein is LysM and putative peptidoglycan-binding domain-containing protein 2 (lysmd2).